We begin with the raw amino-acid sequence, 262 residues long: MAVISMKQLLEAGVHFGHQTRRWNPKMKRYIFTERNGIYIIDLQKTVKKVEEAYNFIKQVSEDGGKVLFVGTKKQAQDSVKAEAERAGQFYVNQRWLGGILTNYKTISKRIKRISEIEKMEEDGLFEVLPKKEVVELKKEYDRLIKFLGGIRDMKSMPQALFVVDPRKERNAIAEARKLHIPIVGIVDTNCDPDEIDYVIPANDDAIRAVKLLTGKMADAILEGQQGVSNEEVAAEQNIDLDESKEATEAETTEENTSVESN.

The segment at 228-262 (VSNEEVAAEQNIDLDESKEATEAETTEENTSVESN) is disordered.

The protein belongs to the universal ribosomal protein uS2 family.

The polypeptide is Small ribosomal subunit protein uS2 (Staphylococcus saprophyticus subsp. saprophyticus (strain ATCC 15305 / DSM 20229 / NCIMB 8711 / NCTC 7292 / S-41)).